A 230-amino-acid polypeptide reads, in one-letter code: 6-carboxyhexanoate--CoA ligase (230 aa).

It belongs to the BioW family. In terms of assembly, homodimer. Mg(2+) is required as a cofactor.

The catalysed reaction is heptanedioate + ATP + CoA = 6-carboxyhexanoyl-CoA + AMP + diphosphate. Its pathway is metabolic intermediate metabolism; pimeloyl-CoA biosynthesis; pimeloyl-CoA from pimelate: step 1/1. Functionally, catalyzes the transformation of pimelate into pimeloyl-CoA with concomitant hydrolysis of ATP to AMP. The protein is 6-carboxyhexanoate--CoA ligase of Staphylococcus aureus (strain MRSA252).